Reading from the N-terminus, the 864-residue chain is MDQTTHDASAYDFTAAEARWQAAWEARNCFATADAPQGGRRKCYVLEMFPYPSGKIHMGHVRNYAIGDVIARARRAQGYDVLHPMGWDAFGLPAENAARERNVDPAKWTRDNIAAMKADLKRVGLSVDWSREFATCDPEYYGHQQKLFLDLWRAGLAYRRESAVNWDPVDMTVLANEQVIDGRGWKSGAPVEKRKLRQWFFRITDFAADLLAGLDTLENWPERVRTMQRNWIGRSEGAEFTIRLAAPCGGIESVPVYSTRPDTLFGMSFVALAPDHPLATAVAAANPEAAAFIAECQSAGTSEAAIEAAEKRGFDTGLRVVHPFDPSRTHPVWIANFVLMDYGTGAIFGCPAHDQRDLDFARKYGLDVTVVVAPKDDPGLAVGDVAFTGDGVIVNSGFLDGLDVAAAKSRAIAELESRGAGKGVVNWRLRDWGVSRQRAWGCPIPMIHCEVCGTVPVPEKDLPVRLPDDLPFDRPGNALDHHPSWKHVACPQCGAAAQRETDTFDTFVDSSWYFARFCAPHAPVPADPAATSHWMPVDHYIGGIEHAILHLLYARFFTRAMHRLGQVGVAEPFAGLFTQGMLTHESYRTEDGKWLYPEEVIRHADHATTLDGRKVIVGPIEKMSKSKRNTVDPSAVIARFGADTARWFVLSDNPPERDVEWTEAGAQGAFRYVQRLYRLARSVAADRADDVALERAEGEARKLRQATHRTIAAVTEAIDGFAFNVAIARLYELANAIAETEGRDAPGLPAARREAMSALIRLAAPIIPHVAEEANAQVSPEAGLVVNQPWPVAEPELLKRDSVTLAVQIMGKLRGTIELPPGADAETAIAAAMAEPRIAQLLEGATIVKRIHVPDRIVNFVVRP.

A 'HIGH' region motif is present at residues 50–60; it reads PYPSGKIHMGH. A 'KMSKS' region motif is present at residues 622–626; it reads KMSKS. K625 serves as a coordination point for ATP.

Belongs to the class-I aminoacyl-tRNA synthetase family.

The protein resides in the cytoplasm. The catalysed reaction is tRNA(Leu) + L-leucine + ATP = L-leucyl-tRNA(Leu) + AMP + diphosphate. The sequence is that of Leucine--tRNA ligase from Acidiphilium cryptum (strain JF-5).